Consider the following 74-residue polypeptide: Protein SlyX homolog (74 aa).

Residues 52-74 (LKQMQENQSTDSDPADEPPPPHY) are disordered.

It belongs to the SlyX family.

This is Protein SlyX homolog from Idiomarina loihiensis (strain ATCC BAA-735 / DSM 15497 / L2-TR).